The primary structure comprises 492 residues: Aspartyl/glutamyl-tRNA(Asn/Gln) amidotransferase subunit B (492 aa).

This sequence belongs to the GatB/GatE family. GatB subfamily. As to quaternary structure, heterotrimer of A, B and C subunits.

The enzyme catalyses L-glutamyl-tRNA(Gln) + L-glutamine + ATP + H2O = L-glutaminyl-tRNA(Gln) + L-glutamate + ADP + phosphate + H(+). It carries out the reaction L-aspartyl-tRNA(Asn) + L-glutamine + ATP + H2O = L-asparaginyl-tRNA(Asn) + L-glutamate + ADP + phosphate + 2 H(+). Its function is as follows. Allows the formation of correctly charged Asn-tRNA(Asn) or Gln-tRNA(Gln) through the transamidation of misacylated Asp-tRNA(Asn) or Glu-tRNA(Gln) in organisms which lack either or both of asparaginyl-tRNA or glutaminyl-tRNA synthetases. The reaction takes place in the presence of glutamine and ATP through an activated phospho-Asp-tRNA(Asn) or phospho-Glu-tRNA(Gln). The chain is Aspartyl/glutamyl-tRNA(Asn/Gln) amidotransferase subunit B from Azorhizobium caulinodans (strain ATCC 43989 / DSM 5975 / JCM 20966 / LMG 6465 / NBRC 14845 / NCIMB 13405 / ORS 571).